We begin with the raw amino-acid sequence, 865 residues long: Bifunctional uridylyltransferase/uridylyl-removing enzyme (865 aa).

A uridylyltransferase region spans residues 1 to 318; the sequence is MPHVDLNPLK…FPRPDSDARL (318 aa). The interval 319–675 is uridylyl-removing; that stretch reads IDDDFRNLRE…VRPTEHGEGL (357 aa). The region spanning 437 to 559 is the HD domain; that stretch reads VDQHTLAVVR…VGDERRLAAL (123 aa). ACT domains follow at residues 676 to 762 and 789 to 865; these read QVMV…RLPH and RLSV…QQAA. The interval 747-767 is disordered; that stretch reads DPHAARHAHAPRRLPHSHARR. Basic residues predominate over residues 751–767; sequence ARHAHAPRRLPHSHARR.

The protein belongs to the GlnD family. It depends on Mg(2+) as a cofactor.

The catalysed reaction is [protein-PII]-L-tyrosine + UTP = [protein-PII]-uridylyl-L-tyrosine + diphosphate. It catalyses the reaction [protein-PII]-uridylyl-L-tyrosine + H2O = [protein-PII]-L-tyrosine + UMP + H(+). Uridylyltransferase (UTase) activity is inhibited by glutamine, while glutamine activates uridylyl-removing (UR) activity. Its function is as follows. Modifies, by uridylylation and deuridylylation, the PII regulatory proteins (GlnB and homologs), in response to the nitrogen status of the cell that GlnD senses through the glutamine level. Under low glutamine levels, catalyzes the conversion of the PII proteins and UTP to PII-UMP and PPi, while under higher glutamine levels, GlnD hydrolyzes PII-UMP to PII and UMP (deuridylylation). Thus, controls uridylylation state and activity of the PII proteins, and plays an important role in the regulation of nitrogen assimilation and metabolism. The chain is Bifunctional uridylyltransferase/uridylyl-removing enzyme from Bordetella bronchiseptica (strain ATCC BAA-588 / NCTC 13252 / RB50) (Alcaligenes bronchisepticus).